Consider the following 210-residue polypeptide: Large ribosomal subunit protein uL4 (210 aa).

The span at 41–52 shows a compositional bias: polar residues; it reads MNNARQGTASSK. Residues 41 to 80 are disordered; that stretch reads MNNARQGTASSKTRSEVRGGGRKPWRQKGTGRARAGSSRS. Residues 60-71 show a composition bias toward basic residues; sequence GGRKPWRQKGTG.

Belongs to the universal ribosomal protein uL4 family. Part of the 50S ribosomal subunit.

In terms of biological role, one of the primary rRNA binding proteins, this protein initially binds near the 5'-end of the 23S rRNA. It is important during the early stages of 50S assembly. It makes multiple contacts with different domains of the 23S rRNA in the assembled 50S subunit and ribosome. Forms part of the polypeptide exit tunnel. In Acaryochloris marina (strain MBIC 11017), this protein is Large ribosomal subunit protein uL4.